Consider the following 719-residue polypeptide: Pesticidal crystal protein Cry1Ia (719 aa).

Belongs to the delta endotoxin family.

Promotes colloidosmotic lysis by binding to the midgut epithelial cells of certain coleopteran and lepidopteran species. Active on Plutella xylostella and Bombyx mori. In Bacillus thuringiensis subsp. kurstaki, this protein is Pesticidal crystal protein Cry1Ia (cry1Ia).